The following is a 963-amino-acid chain: Kinesin-1 heavy chain (963 aa).

Ala2 is modified (N-acetylalanine). A Kinesin motor domain is found at 8-325; that stretch reads NIKVMCRFRP…LLFGQRAKTI (318 aa). ATP is bound at residue 85–92; it reads GQTSSGKT. A Glycyl lysine isopeptide (Lys-Gly) (interchain with G-Cter in SUMO2) cross-link involves residue Lys213. The stretch at 329 to 914 forms a coiled coil; the sequence is VCVNVELTAE…AVRSKNMARR (586 aa). The disordered stretch occupies residues 908–963; that stretch reads SKNMARRGHSAQIAKPIRPGQHPAASPTHPGTVRGGGSFVQNNQPVGLRGGGGKQS. Residues 915 to 963 are globular; that stretch reads GHSAQIAKPIRPGQHPAASPTHPGTVRGGGSFVQNNQPVGLRGGGGKQS. Ser933 and Ser945 each carry phosphoserine. Omega-N-methylarginine is present on Arg956.

Belongs to the TRAFAC class myosin-kinesin ATPase superfamily. Kinesin family. Kinesin subfamily. Oligomer composed of two heavy chains and two light chains. Interacts with GRIP1 and PPP1R42. Interacts with SYBU. Interacts with JAKMIP1. Interacts with PLEKHM2. Interacts with ECPAS. Interacts with ZFYVE27. Found in a complex with OGT, RHOT1, RHOT2 and TRAK1. Interacts with APP (via cytoplasmic domain).

Its subcellular location is the cytoplasm. The protein resides in the cytoskeleton. It localises to the cytolytic granule membrane. The protein localises to the lysosome membrane. Functionally, microtubule-dependent motor required for normal distribution of mitochondria and lysosomes. May be involved in the mechanisms of growth arrest induced by exposure to DNA-damaging drugs or by cellular senescence. Can induce formation of neurite-like membrane protrusions in non-neuronal cells in a ZFYVE27-dependent manner. Regulates centrosome and nuclear positioning during mitotic entry. During the G2 phase of the cell cycle in a BICD2-dependent manner, antagonizes dynein function and drives the separation of nuclei and centrosomes. Required for anterograde axonal transportation of MAPK8IP3/JIP3 which is essential for MAPK8IP3/JIP3 function in axon elongation. Through binding with PLEKHM2 and ARL8B, directs lysosome movement toward microtubule plus ends. Involved in NK cell-mediated cytotoxicity. Drives the polarization of cytolytic granules and microtubule-organizing centers (MTOCs) toward the immune synapse between effector NK lymphocytes and target cells. This is Kinesin-1 heavy chain (Kif5b) from Mus musculus (Mouse).